The following is a 579-amino-acid chain: Putative fatty-acid--CoA ligase fadD21 (579 aa).

This sequence belongs to the ATP-dependent AMP-binding enzyme family.

In Mycobacterium leprae (strain TN), this protein is Putative fatty-acid--CoA ligase fadD21 (fadD21).